The primary structure comprises 80 residues: RNA-binding protein Hfq (80 aa).

The Sm domain occupies 9–69 (DVFLNQVRKE…VSTISPNSPV (61 aa)).

It belongs to the Hfq family. Homohexamer.

Its function is as follows. RNA chaperone that binds small regulatory RNA (sRNAs) and mRNAs to facilitate mRNA translational regulation in response to envelope stress, environmental stress and changes in metabolite concentrations. Also binds with high specificity to tRNAs. The protein is RNA-binding protein Hfq of Alkaliphilus oremlandii (strain OhILAs) (Clostridium oremlandii (strain OhILAs)).